Consider the following 471-residue polypeptide: MSSPQNTSCPPSQHSLSFTQGLLLGQLSVVLLIGAFIKFFIFGESPSSSSRGISQRTAPRKRSYSVNSTLFRDAASRSLKESASSNVLRPVPSSSTNTKSILRKTYYNAIPTNFQKNSRHRLHHSTHQPESLDWFNVLIAQLIAQYRQTAYILKDSPTSSILDSLTETLNNVDKKPSWIDRINVTDISIGEEFPIFSNCRVIAVEDPNSDGGRLQALMDVDLSDDNLSLAIETNLLLNYPKPASAVLPVALSVSVVRFSGTLCISFVPSPGTTESSPHLPHPENQNESKPSRQDPEIPTNKDGVRSGIPKTSLAFSFLPDYRLDISVRSLIGSRSRLQDVPKVAQLVEARVQSWFEDRVVEPRVQLVALPGIWPRMGRTGVRAQEDHDAVSIDSEDPATKATHSGFTPVNANRDGLQASRDLNMEGLRYRRGNAGDEATTDEYERLTRGDTQSVGEQLRIPGSLPGAPAVA.

At 1 to 21 (MSSPQNTSCPPSQHSLSFTQG) the chain is on the lumenal side. The chain crosses the membrane as a helical span at residues 22–42 (LLLGQLSVVLLIGAFIKFFIF). The Cytoplasmic portion of the chain corresponds to 43–471 (GESPSSSSRG…GSLPGAPAVA (429 aa)). Residues 128–370 (QPESLDWFNV…EPRVQLVALP (243 aa)) enclose the SMP-LTD domain. Disordered stretches follow at residues 271–306 (GTTE…GVRS), 395–415 (EDPA…NRDG), and 448–471 (RGDT…PAVA). The span at 280–295 (PHPENQNESKPSRQDP) shows a compositional bias: basic and acidic residues. Residues 401 to 410 (ATHSGFTPVN) are compositionally biased toward polar residues.

It belongs to the MMM1 family. In terms of assembly, homodimer. Component of the ER-mitochondria encounter structure (ERMES) or MDM complex, composed of MMM1, MDM10, MDM12 and MDM34. An MMM1 homodimer associates with one molecule of MDM12 on each side in a pairwise head-to-tail manner, and the SMP-LTD domains of MMM1 and MDM12 generate a continuous hydrophobic tunnel for phospholipid trafficking.

It localises to the endoplasmic reticulum membrane. In terms of biological role, component of the ERMES/MDM complex, which serves as a molecular tether to connect the endoplasmic reticulum (ER) and mitochondria. Components of this complex are involved in the control of mitochondrial shape and protein biogenesis, and function in nonvesicular lipid trafficking between the ER and mitochondria. The MDM12-MMM1 subcomplex functions in the major beta-barrel assembly pathway that is responsible for biogenesis of all outer membrane beta-barrel proteins, and acts in a late step after the SAM complex. The MDM10-MDM12-MMM1 subcomplex further acts in the TOM40-specific pathway after the action of the MDM12-MMM1 complex. Essential for establishing and maintaining the structure of mitochondria and maintenance of mtDNA nucleoids. The sequence is that of Maintenance of mitochondrial morphology protein 1 from Arthroderma otae (strain ATCC MYA-4605 / CBS 113480) (Microsporum canis).